We begin with the raw amino-acid sequence, 862 residues long: Valine--tRNA ligase (862 aa).

The 'HIGH' region signature appears at 44 to 53 (NVTGSLHMGH). 8 residues coordinate Zn(2+): cysteine 176, cysteine 179, cysteine 344, cysteine 347, cysteine 417, cysteine 420, cysteine 438, and cysteine 441. The 'KMSKS' region signature appears at 528-532 (KMSKS). Lysine 531 provides a ligand contact to ATP. A coiled-coil region spans residues 802–862 (RRRQEKRLKE…RIREALSQIG (61 aa)).

This sequence belongs to the class-I aminoacyl-tRNA synthetase family. ValS type 1 subfamily. In terms of assembly, monomer. Requires Zn(2+) as cofactor.

The protein localises to the cytoplasm. The enzyme catalyses tRNA(Val) + L-valine + ATP = L-valyl-tRNA(Val) + AMP + diphosphate. Catalyzes the attachment of valine to tRNA(Val). As ValRS can inadvertently accommodate and process structurally similar amino acids such as threonine, to avoid such errors, it has a 'posttransfer' editing activity that hydrolyzes mischarged Thr-tRNA(Val) in a tRNA-dependent manner. In Thermus thermophilus (strain ATCC 27634 / DSM 579 / HB8), this protein is Valine--tRNA ligase.